We begin with the raw amino-acid sequence, 328 residues long: MDKKVSFTSSVAHSTPPYLSTSISWGLPTKSNGVTESLSLKVVDARPERLINTKNISFQDQDSSSTLSSAQSSNDVTSSGDDNPSRQISFLAHSDVCKGFEETQRKRFAIKSGSSTAGIADIHSSPSKANFSFHYADPHFGGLMPAAYLPQATIWNPQMTRVPLPFDLIENEPVFVNAKQFHAIMRRRQQRAKLEAQNKLIKARKPYLHESRHVHALKRPRGSGGRFLNTKKLQESTDPKQDMPIQQQHATGNMSRFVLYQLQNSNDCDCSTTSRSDITSASDSVNLFGHSEFLISDCPSQTNPTMYVHGQSNDMHGGRNTHHFSVHI.

Residues Lys-54–Arg-86 are disordered. A compositionally biased stretch (low complexity) spans Ser-57–Asp-75. Positions Val-76–Arg-86 are enriched in polar residues. The Subunit association domain (SAD) signature appears at Phe-175–Asn-198. The NFYA/HAP2-type DNA-binding region spans Lys-205–Thr-230.

This sequence belongs to the NFYA/HAP2 subunit family. As to quaternary structure, heterotrimeric transcription factor composed of three components, NF-YA, NF-YB and NF-YC. NF-YB and NF-YC must interact and dimerize for NF-YA association and DNA binding. Expressed in the whole plant, except roots.

The protein localises to the nucleus. Functionally, stimulates the transcription of various genes by recognizing and binding to a CCAAT motif in promoters. This chain is Nuclear transcription factor Y subunit A-8 (NFYA8), found in Arabidopsis thaliana (Mouse-ear cress).